The chain runs to 507 residues: E3 ubiquitin-protein ligase makorin-3 (507 aa).

Positions 1-21 (MEEPAAPSEAHEAAGAQAGAE) are enriched in low complexity. Disordered stretches follow at residues 1 to 48 (MEEP…DSAL) and 69 to 89 (RGGL…PLPS). The segment at 95–122 (WTKQIICRYYIHGQCKEGENCRYSHDLS) adopts a C3H1-type 1 zinc-finger fold. The tract at residues 126-149 (MATEGGVSPPGASAGGGPSTAAHI) is disordered. The segment at 238–265 (GSGLRFCYYASRGVCFRGESCMYLHGDI) adopts a C3H1-type 2 zinc-finger fold. Residues 266 to 293 (CDMCGLQTLHPMDAAQREEHMRACIEAH) are makorin-type Cys-His. An RING-type zinc finger spans residues 311 to 365 (CGICMEVVYEKANPNDRRFGILSNCNHSFCIRCIRRWRSARQFENRIVKSCPQCR). The C3H1-type 3 zinc finger occupies 394–423 (AMSNKACRYFAEGRGNCPFGDTCFYKHEYP).

Ubiquitous.

Its subcellular location is the nucleus. The catalysed reaction is S-ubiquitinyl-[E2 ubiquitin-conjugating enzyme]-L-cysteine + [acceptor protein]-L-lysine = [E2 ubiquitin-conjugating enzyme]-L-cysteine + N(6)-ubiquitinyl-[acceptor protein]-L-lysine.. Its pathway is protein modification; protein ubiquitination. Functionally, E3 ubiquitin ligase catalyzing the covalent attachment of ubiquitin moieties onto substrate proteins. Acts as a key developmental timer that helps ensure puberty begins at the appropriate age, by inhibiting premature activation of the reproductive hormone cascade. Epigenetically regulates GNRH1 transcription by disrupting the binding of methyl-DNA binding protein 3/MBD3 to the promoter of GNRH1. Mechanistically, mediates the non-proteolytic ubiquitination of MBD3 at multiple sites with 'Lys27' ubiquitin linkages and thereby regulates the methylation status of the genome, including GNRH1 promoter. Modulates the stability and translation of GNRH1 mRNA by mediating the non-proteolytic ubiquitination of PABP family members PABPC1, PABPC3 and PABPC4 at multiple sites. Also participates in the maintenance of genomic and epigenomic stability by regulating the abundance of APEX2 via 'Lys-48'-linked ubiquitination. The protein is E3 ubiquitin-protein ligase makorin-3 (MKRN3) of Homo sapiens (Human).